The sequence spans 71 residues: Translation initiation factor IF-1 (71 aa).

The S1-like domain occupies 1 to 71; it reads MSKQEMLSFS…LTKGRITFRG (71 aa).

It belongs to the IF-1 family. In terms of assembly, component of the 30S ribosomal translation pre-initiation complex which assembles on the 30S ribosome in the order IF-2 and IF-3, IF-1 and N-formylmethionyl-tRNA(fMet); mRNA recruitment can occur at any time during PIC assembly.

It is found in the cytoplasm. One of the essential components for the initiation of protein synthesis. Stabilizes the binding of IF-2 and IF-3 on the 30S subunit to which N-formylmethionyl-tRNA(fMet) subsequently binds. Helps modulate mRNA selection, yielding the 30S pre-initiation complex (PIC). Upon addition of the 50S ribosomal subunit IF-1, IF-2 and IF-3 are released leaving the mature 70S translation initiation complex. The chain is Translation initiation factor IF-1 from Pelagibacter ubique (strain HTCC1062).